We begin with the raw amino-acid sequence, 102 residues long: Large ribosomal subunit protein uL24 (102 aa).

Belongs to the universal ribosomal protein uL24 family. In terms of assembly, part of the 50S ribosomal subunit.

Its function is as follows. One of two assembly initiator proteins, it binds directly to the 5'-end of the 23S rRNA, where it nucleates assembly of the 50S subunit. Functionally, one of the proteins that surrounds the polypeptide exit tunnel on the outside of the subunit. This is Large ribosomal subunit protein uL24 from Ralstonia nicotianae (strain ATCC BAA-1114 / GMI1000) (Ralstonia solanacearum).